We begin with the raw amino-acid sequence, 403 residues long: Phospholipase A1-II 2 (403 aa).

Residue S218 is the Acyl-ester intermediate of the active site. Active-site charge relay system residues include S218, D286, and H323. A disordered region spans residues 381–403 (GPDGRWVLQDHEPDDDDDDDDDD). Over residues 392 to 403 (EPDDDDDDDDDD) the composition is skewed to acidic residues.

The protein belongs to the AB hydrolase superfamily. Lipase family.

The protein localises to the cytoplasm. Functionally, acylhydrolase that catalyzes the hydrolysis of phospholipids at the sn-1 position. The polypeptide is Phospholipase A1-II 2 (Oryza sativa subsp. indica (Rice)).